The following is a 655-amino-acid chain: Ribonuclease 3 (655 aa).

Disordered stretches follow at residues 1 to 148 (MENL…NSEK) and 171 to 376 (LIAP…NIPL). Positions 1–400 (MENLEKNTKK…NYIKDNYPVI (400 aa)) are unknown. The span at 8-20 (TKKKIKKPNNFKK) shows a compositional bias: basic residues. Composition is skewed to basic and acidic residues over residues 21–34 (NNKD…DKPT) and 69–89 (DYEK…RSDE). Low complexity predominate over residues 92-102 (NNNSKKQNNNK). A compositionally biased stretch (basic residues) spans 103–115 (QAKKKANKNKKQK). Residues 135–148 (AANNQVKAIPNSEK) are compositionally biased toward polar residues. Low complexity predominate over residues 206 to 223 (NNFVNNQKNHNKNNAGNK). Polar residues-rich tracts occupy residues 229–242 (PTKP…SKST) and 250–259 (PNFTSNQPKP). 2 stretches are compositionally biased toward basic and acidic residues: residues 260-274 (TQKE…KKAE) and 298-309 (DQTKKKQPKENK). The segment covering 310-332 (NQQIKAVNLNNNQQKTNNNNQKN) has biased composition (low complexity). Over residues 333–350 (SVDKSENDNNKKKSEANQ) the composition is skewed to basic and acidic residues. The segment covering 351–360 (KQENLNPNNN) has biased composition (low complexity). Residues 401 to 655 (YADLKEKNRL…KFRGLLKLEK (255 aa)) are RNase 3. One can recognise an RNase III domain in the interval 432–556 (LELLLKKFKV…FIGAMYLDQG (125 aa)). E472 serves as a coordination point for Mg(2+). The active site involves D476. The Mg(2+) site is built by D542 and E545. Residue E545 is part of the active site. The DRBM domain maps to 582-649 (DYKSIFQEII…AKEAISKFRG (68 aa)).

The protein belongs to the ribonuclease III family. As to quaternary structure, homodimer. It depends on Mg(2+) as a cofactor.

It is found in the cytoplasm. It carries out the reaction Endonucleolytic cleavage to 5'-phosphomonoester.. Its function is as follows. Digests double-stranded RNA. Involved in the processing of primary rRNA transcript to yield the immediate precursors to the large and small rRNAs (23S and 16S). Processes some mRNAs, and tRNAs when they are encoded in the rRNA operon. Processes pre-crRNA and tracrRNA of type II CRISPR loci if present in the organism. The protein is Ribonuclease 3 (rnc) of Mycoplasmoides gallisepticum (strain R(low / passage 15 / clone 2)) (Mycoplasma gallisepticum).